The sequence spans 569 residues: Matrix metalloproteinase-21 (569 aa).

A signal peptide spans 1–24; the sequence is MLAASIFRPTLLLCWLAAPWPTQP. Positions 25–144 are excised as a propeptide; sequence ESLFHSRDRS…GPPPRARSRR (120 aa). Positions 115-122 match the Cysteine switch motif; the sequence is PRCGVPDM. Residues 115–166 are disordered; it reads PRCGVPDMRPPPPSAPPSPPGPPPRARSRRSPRAPLSLSRRGWQPRGYPDGG. Cys-117 contributes to the Zn(2+) binding site. Residues 122–139 are compositionally biased toward pro residues; it reads MRPPPPSAPPSPPGPPPR. Positions 147–156 are enriched in low complexity; the sequence is RAPLSLSRRG. Residue His-283 coordinates Zn(2+). Glu-284 is an active-site residue. The Zn(2+) site is built by His-287 and His-293. Cys-329 and Cys-560 are joined by a disulfide. 4 Hemopexin repeats span residues 330 to 389, 391 to 447, 448 to 496, and 503 to 559; these read EGSF…WPGI, THNI…FPGI, PSPL…FPAV, and FRNI…WFDV. N-linked (GlcNAc...) asparagine glycosylation occurs at Asn-372.

Belongs to the peptidase M10A family. Requires Zn(2+) as cofactor. Ca(2+) serves as cofactor. In terms of processing, the precursor is cleaved by a furin endopeptidase. In terms of tissue distribution, identified in fetal brain, kidney and liver. In adult tissues found primarily in ovary, kidney, liver, lung, placenta, brain and peripheral blood leukocytes. Expressed as well in various cancer cell lines.

Its subcellular location is the secreted. Plays a specialized role in the generation of left-right asymmetry during embryogenesis. May act as a negative regulator of the NOTCH-signaling pathway. Cleaves alpha-1-antitrypsin. The polypeptide is Matrix metalloproteinase-21 (MMP21) (Homo sapiens (Human)).